The primary structure comprises 209 residues: Large ribosomal subunit protein uL3 (209 aa).

Residues R130–R154 form a disordered region.

Belongs to the universal ribosomal protein uL3 family. In terms of assembly, part of the 50S ribosomal subunit. Forms a cluster with proteins L14 and L19.

Functionally, one of the primary rRNA binding proteins, it binds directly near the 3'-end of the 23S rRNA, where it nucleates assembly of the 50S subunit. This is Large ribosomal subunit protein uL3 from Clostridium kluyveri (strain NBRC 12016).